We begin with the raw amino-acid sequence, 313 residues long: 4-hydroxy-3-methylbut-2-enyl diphosphate reductase (313 aa).

A [4Fe-4S] cluster-binding site is contributed by Cys-14. (2E)-4-hydroxy-3-methylbut-2-enyl diphosphate contacts are provided by His-43 and His-76. 2 residues coordinate dimethylallyl diphosphate: His-43 and His-76. Residues His-43 and His-76 each coordinate isopentenyl diphosphate. Residue Cys-98 coordinates [4Fe-4S] cluster. His-126 contacts (2E)-4-hydroxy-3-methylbut-2-enyl diphosphate. His-126 contacts dimethylallyl diphosphate. His-126 contributes to the isopentenyl diphosphate binding site. Glu-128 (proton donor) is an active-site residue. Thr-166 contributes to the (2E)-4-hydroxy-3-methylbut-2-enyl diphosphate binding site. Cys-196 is a [4Fe-4S] cluster binding site. The (2E)-4-hydroxy-3-methylbut-2-enyl diphosphate site is built by Ser-224, Ser-225, Asn-226, and Ser-269. Residues Ser-224, Ser-225, Asn-226, and Ser-269 each contribute to the dimethylallyl diphosphate site. Ser-224, Ser-225, Asn-226, and Ser-269 together coordinate isopentenyl diphosphate.

It belongs to the IspH family. [4Fe-4S] cluster is required as a cofactor.

It catalyses the reaction isopentenyl diphosphate + 2 oxidized [2Fe-2S]-[ferredoxin] + H2O = (2E)-4-hydroxy-3-methylbut-2-enyl diphosphate + 2 reduced [2Fe-2S]-[ferredoxin] + 2 H(+). The catalysed reaction is dimethylallyl diphosphate + 2 oxidized [2Fe-2S]-[ferredoxin] + H2O = (2E)-4-hydroxy-3-methylbut-2-enyl diphosphate + 2 reduced [2Fe-2S]-[ferredoxin] + 2 H(+). Its pathway is isoprenoid biosynthesis; dimethylallyl diphosphate biosynthesis; dimethylallyl diphosphate from (2E)-4-hydroxy-3-methylbutenyl diphosphate: step 1/1. It functions in the pathway isoprenoid biosynthesis; isopentenyl diphosphate biosynthesis via DXP pathway; isopentenyl diphosphate from 1-deoxy-D-xylulose 5-phosphate: step 6/6. Catalyzes the conversion of 1-hydroxy-2-methyl-2-(E)-butenyl 4-diphosphate (HMBPP) into a mixture of isopentenyl diphosphate (IPP) and dimethylallyl diphosphate (DMAPP). Acts in the terminal step of the DOXP/MEP pathway for isoprenoid precursor biosynthesis. This Tropheryma whipplei (strain TW08/27) (Whipple's bacillus) protein is 4-hydroxy-3-methylbut-2-enyl diphosphate reductase.